The primary structure comprises 111 residues: uncharacterized protein (111 aa).

This sequence to B.subtilis XkdW.

This is an uncharacterized protein from Bacillus subtilis (strain 168).